Here is a 130-residue protein sequence, read N- to C-terminus: 3-hydroxyisobutyrate dehydrogenase, mitochondrial (130 aa).

Residues 1 to 17 (TPVGFIGLGNMGNPMAK), 25 to 26 (LP), and Asn30 each bind NAD(+). N6-acetyllysine is present on Lys43. N6-acetyllysine; alternate is present on Lys47. Lys47 bears the N6-succinyllysine; alternate mark. The residue at position 101 (Lys101) is an N6-succinyllysine.

Belongs to the HIBADH-related family. 3-hydroxyisobutyrate dehydrogenase subfamily. Homodimer.

The protein resides in the mitochondrion. The catalysed reaction is 3-hydroxy-2-methylpropanoate + NAD(+) = 2-methyl-3-oxopropanoate + NADH + H(+). It participates in amino-acid degradation; L-valine degradation. This is 3-hydroxyisobutyrate dehydrogenase, mitochondrial from Mesocricetus auratus (Golden hamster).